We begin with the raw amino-acid sequence, 162 residues long: Phosphopantetheine adenylyltransferase (162 aa).

Threonine 10 is a substrate binding site. ATP-binding positions include 10-11 (TF) and histidine 18. Lysine 42, methionine 74, and arginine 88 together coordinate substrate. ATP-binding positions include 89–91 (GLR), glutamate 99, and 124–130 (YAFLSST).

Belongs to the bacterial CoaD family. As to quaternary structure, homohexamer. Mg(2+) serves as cofactor.

The protein resides in the cytoplasm. It catalyses the reaction (R)-4'-phosphopantetheine + ATP + H(+) = 3'-dephospho-CoA + diphosphate. It participates in cofactor biosynthesis; coenzyme A biosynthesis; CoA from (R)-pantothenate: step 4/5. Functionally, reversibly transfers an adenylyl group from ATP to 4'-phosphopantetheine, yielding dephospho-CoA (dPCoA) and pyrophosphate. The protein is Phosphopantetheine adenylyltransferase of Aliivibrio fischeri (strain ATCC 700601 / ES114) (Vibrio fischeri).